A 121-amino-acid polypeptide reads, in one-letter code: Small ribosomal subunit protein bS16 (121 aa).

Residues 85–110 show a composition bias toward basic and acidic residues; it reads REARNNPKKAEPGKKAQERAAERAAK. The tract at residues 85-121 is disordered; the sequence is REARNNPKKAEPGKKAQERAAERAAKAAEASEAASAE. Residues 111–121 show a composition bias toward low complexity; that stretch reads AAEASEAASAE.

Belongs to the bacterial ribosomal protein bS16 family.

The sequence is that of Small ribosomal subunit protein bS16 from Azorhizobium caulinodans (strain ATCC 43989 / DSM 5975 / JCM 20966 / LMG 6465 / NBRC 14845 / NCIMB 13405 / ORS 571).